Consider the following 131-residue polypeptide: Ribosome-binding factor A (131 aa).

The protein belongs to the RbfA family. As to quaternary structure, monomer. Binds 30S ribosomal subunits, but not 50S ribosomal subunits or 70S ribosomes.

The protein resides in the cytoplasm. In terms of biological role, one of several proteins that assist in the late maturation steps of the functional core of the 30S ribosomal subunit. Associates with free 30S ribosomal subunits (but not with 30S subunits that are part of 70S ribosomes or polysomes). Required for efficient processing of 16S rRNA. May interact with the 5'-terminal helix region of 16S rRNA. In Thermotoga petrophila (strain ATCC BAA-488 / DSM 13995 / JCM 10881 / RKU-1), this protein is Ribosome-binding factor A.